A 353-amino-acid chain; its full sequence is Ribosomal RNA large subunit methyltransferase M (353 aa).

S-adenosyl-L-methionine is bound by residues S179, 212–215, D231, D251, and D267; that span reads APGG. Residue K296 is the Proton acceptor of the active site.

It belongs to the class I-like SAM-binding methyltransferase superfamily. RNA methyltransferase RlmE family. RlmM subfamily. As to quaternary structure, monomer.

It localises to the cytoplasm. The enzyme catalyses cytidine(2498) in 23S rRNA + S-adenosyl-L-methionine = 2'-O-methylcytidine(2498) in 23S rRNA + S-adenosyl-L-homocysteine + H(+). Catalyzes the 2'-O-methylation at nucleotide C2498 in 23S rRNA. In Laribacter hongkongensis (strain HLHK9), this protein is Ribosomal RNA large subunit methyltransferase M.